The chain runs to 394 residues: MTKIETRTEPMVLNMGPHHPSMHGVLRLIVTLDGEDVVDCEPVIGYLHRGMEKIAESRTNIMYVPYVSRWDYAAGMFNEAITVNAPEKLADIEVPKRAQYIRVIMLELNRIANHLLWLGPFMADVGAQTPFFYIFREREMIYDLWEAASGMRLINNNYFRVGGVAVDLPYGWNDKCEDFCDYFLPKVDEYEKLITNNPIFRRRVEGVGTVTREEAINWGLSGPMLRGSGVKWDLRKVDHYECYDELDWEVQYETAGDCFARYLVRIREMRESVKIIRQALKAMPGGPYENLEAKRLQEGKKSEWNDFQYQYIAKKVAPTFKIPAGEHYVRLESGKGELGIFIQGNDDVFPWRWKIRSADFNNLQILPHILKGVKVADIMAILGSIDIIMGSVDR.

Belongs to the complex I 49 kDa subunit family. In terms of assembly, NDH-1 can be composed of about 15 different subunits; different subcomplexes with different compositions have been identified which probably have different functions. The initiator methionine has been seen to be kept and removed.

It localises to the cellular thylakoid membrane. The enzyme catalyses a plastoquinone + NADH + (n+1) H(+)(in) = a plastoquinol + NAD(+) + n H(+)(out). It carries out the reaction a plastoquinone + NADPH + (n+1) H(+)(in) = a plastoquinol + NADP(+) + n H(+)(out). Its function is as follows. NDH-1 shuttles electrons from an unknown electron donor, via FMN and iron-sulfur (Fe-S) centers, to quinones in the respiratory and/or the photosynthetic chain. The immediate electron acceptor for the enzyme in this species is believed to be plastoquinone. Couples the redox reaction to proton translocation, and thus conserves the redox energy in a proton gradient. Cyanobacterial NDH-1 also plays a role in inorganic carbon-concentration. This is NAD(P)H-quinone oxidoreductase subunit H (ndhH) from Synechocystis sp. (strain ATCC 27184 / PCC 6803 / Kazusa).